A 353-amino-acid polypeptide reads, in one-letter code: Putative permease PerM (353 aa).

A run of 7 helical transmembrane segments spans residues 19 to 39 (IALL…SGLL), 72 to 92 (IVLV…LPIA), 156 to 176 (LVGL…VFFL), 217 to 237 (VLEM…FGLN), 240 to 260 (LLLA…AFVV), 281 to 301 (CFAV…PVLF), and 310 to 330 (LVII…GVFF).

It belongs to the autoinducer-2 exporter (AI-2E) (TC 2.A.86) family.

Its subcellular location is the cell membrane. This chain is Putative permease PerM (perM), found in Escherichia coli O157:H7.